A 115-amino-acid chain; its full sequence is Replication initiation control protein YabA (115 aa).

Zn(2+) contacts are provided by His86, Cys88, Cys102, and Cys105.

The protein belongs to the YabA family. In terms of assembly, homotetramer. Interacts with both DnaA and DnaN, acting as a bridge between these two proteins. Requires Zn(2+) as cofactor.

It localises to the cytoplasm. Its subcellular location is the nucleoid. In terms of biological role, involved in control of chromosome replication initiation. Inhibits the cooperative binding of DnaA to the oriC region, thus negatively regulating initiation of chromosome replication. Inhibits the ability of DnaA-ATP to form a helix on DNA; does not disassemble preformed DnaA-DNA helices. Decreases the residence time of DnaA on the chromosome at its binding sites (oriC, replication forks and promoter-binding sites). Tethers DnaA to the replication machinery via the DNA polymerase beta sliding clamp subunit (dnaN). Associates with oriC and other DnaA targets on the chromosome in a DnaA-dependent manner. This is Replication initiation control protein YabA from Enterococcus faecalis (strain ATCC 700802 / V583).